The primary structure comprises 343 residues: uncharacterized protein (343 aa).

Helical transmembrane passes span 13–33 (VILY…SMCG), 44–64 (LWGY…ATLD), 71–91 (MHPV…LFFI), 121–141 (ILLL…LTGL), 148–168 (NASL…YLIF), 177–197 (FLGI…GDFS), 203–223 (VAVT…LDTV), 244–264 (VGGF…ELPL), 269–289 (YALG…YIAI), 296–316 (MVGA…FIIL), and 320–340 (FSIM…ILYW). EamA domains are found at residues 55–192 (IFFG…YLLT) and 216–340 (FFWS…ILYW).

Belongs to the EamA transporter family.

It is found in the cell membrane. This is an uncharacterized protein from Methanothermobacter thermautotrophicus (strain ATCC 29096 / DSM 1053 / JCM 10044 / NBRC 100330 / Delta H) (Methanobacterium thermoautotrophicum).